A 115-amino-acid chain; its full sequence is uncharacterized protein (115 aa).

An N-terminal signal peptide occupies residues 1 to 20 (MKTFFRTVLFGSLMAVCANS).

This is an uncharacterized protein from Escherichia coli O6:H1 (strain CFT073 / ATCC 700928 / UPEC).